We begin with the raw amino-acid sequence, 243 residues long: UPF0758 protein Tery_2667 (243 aa).

In terms of domain architecture, MPN spans 113–235 (VVESPQAAAD…HSSLRQITNL (123 aa)). Residues His-184, His-186, and Asp-197 each coordinate Zn(2+). A JAMM motif motif is present at residues 184–197 (HNHPSGNVEPSPED).

This sequence belongs to the UPF0758 family.

The sequence is that of UPF0758 protein Tery_2667 from Trichodesmium erythraeum (strain IMS101).